Consider the following 410-residue polypeptide: Cysteine desulfurase IscS (410 aa).

Residues 80–81 (AT), N160, Q188, and 208–210 (SGH) each bind pyridoxal 5'-phosphate. K211 is modified (N6-(pyridoxal phosphate)lysine). T248 provides a ligand contact to pyridoxal 5'-phosphate. Residue C334 is the Cysteine persulfide intermediate of the active site. A [2Fe-2S] cluster-binding site is contributed by C334.

This sequence belongs to the class-V pyridoxal-phosphate-dependent aminotransferase family. NifS/IscS subfamily. Homodimer. Forms a heterotetramer with IscU, interacts with other sulfur acceptors. Requires pyridoxal 5'-phosphate as cofactor.

The protein resides in the cytoplasm. The enzyme catalyses (sulfur carrier)-H + L-cysteine = (sulfur carrier)-SH + L-alanine. It participates in cofactor biosynthesis; iron-sulfur cluster biosynthesis. Master enzyme that delivers sulfur to a number of partners involved in Fe-S cluster assembly, tRNA modification or cofactor biosynthesis. Catalyzes the removal of elemental sulfur atoms from cysteine to produce alanine. Functions as a sulfur delivery protein for Fe-S cluster synthesis onto IscU, an Fe-S scaffold assembly protein, as well as other S acceptor proteins. This Rickettsia typhi (strain ATCC VR-144 / Wilmington) protein is Cysteine desulfurase IscS.